Reading from the N-terminus, the 202-residue chain is Holliday junction branch migration complex subunit RuvA (202 aa).

The segment at 1–65 (MIAYVEGRLA…EDALELYGFA (65 aa)) is domain I. The segment at 66-144 (TWDERQTFIV…VEDLPAAAPL (79 aa)) is domain II. The segment at 145 to 155 (VTGGAPGGVFR) is flexible linker. The interval 155–202 (RDALAGLANLGYGEEEASHVLKEVLHGEPDLDVGGALRAALRALARGR) is domain III.

It belongs to the RuvA family. In terms of assembly, homotetramer. Forms an RuvA(8)-RuvB(12)-Holliday junction (HJ) complex. HJ DNA is sandwiched between 2 RuvA tetramers; dsDNA enters through RuvA and exits via RuvB. An RuvB hexamer assembles on each DNA strand where it exits the tetramer. Each RuvB hexamer is contacted by two RuvA subunits (via domain III) on 2 adjacent RuvB subunits; this complex drives branch migration. In the full resolvosome a probable DNA-RuvA(4)-RuvB(12)-RuvC(2) complex forms which resolves the HJ.

The protein localises to the cytoplasm. In terms of biological role, the RuvA-RuvB-RuvC complex processes Holliday junction (HJ) DNA during genetic recombination and DNA repair, while the RuvA-RuvB complex plays an important role in the rescue of blocked DNA replication forks via replication fork reversal (RFR). RuvA specifically binds to HJ cruciform DNA, conferring on it an open structure. The RuvB hexamer acts as an ATP-dependent pump, pulling dsDNA into and through the RuvAB complex. HJ branch migration allows RuvC to scan DNA until it finds its consensus sequence, where it cleaves and resolves the cruciform DNA. This chain is Holliday junction branch migration complex subunit RuvA, found in Nitratidesulfovibrio vulgaris (strain DP4) (Desulfovibrio vulgaris).